The following is a 279-amino-acid chain: Thymidylate synthase (279 aa).

141–142 lines the dUMP pocket; it reads RR. The active-site Nucleophile is the C161. DUMP is bound by residues 181–184, N192, and 222–224; these read RSND and HVY. D184 serves as a coordination point for (6R)-5,10-methylene-5,6,7,8-tetrahydrofolate. A278 contributes to the (6R)-5,10-methylene-5,6,7,8-tetrahydrofolate binding site.

Belongs to the thymidylate synthase family. In terms of assembly, homodimer.

It carries out the reaction dUMP + (6R)-5,10-methylene-5,6,7,8-tetrahydrofolate = 7,8-dihydrofolate + dTMP. It functions in the pathway pyrimidine metabolism; dTTP biosynthesis. Functionally, provides the sole de novo source of dTMP for DNA biosynthesis. This chain is Thymidylate synthase (thyP3), found in Bacillus subtilis (Bacteriophage phi-3T).